The sequence spans 214 residues: Peptide methionine sulfoxide reductase MsrA 2 (214 aa).

Cys-45 is a catalytic residue.

Belongs to the MsrA Met sulfoxide reductase family.

It carries out the reaction L-methionyl-[protein] + [thioredoxin]-disulfide + H2O = L-methionyl-(S)-S-oxide-[protein] + [thioredoxin]-dithiol. The catalysed reaction is [thioredoxin]-disulfide + L-methionine + H2O = L-methionine (S)-S-oxide + [thioredoxin]-dithiol. Its function is as follows. Has an important function as a repair enzyme for proteins that have been inactivated by oxidation. Catalyzes the reversible oxidation-reduction of methionine sulfoxide in proteins to methionine. The sequence is that of Peptide methionine sulfoxide reductase MsrA 2 (msrA2) from Synechocystis sp. (strain ATCC 27184 / PCC 6803 / Kazusa).